A 638-amino-acid chain; its full sequence is Growth hormone receptor (638 aa).

A signal peptide spans 1–18; the sequence is MDLWQLLLTLALAGSSDA. The Extracellular segment spans residues 19–264; that stretch reads FSGSEPTAAI…NQFTCEEDFY (246 aa). N46 carries an N-linked (GlcNAc...) asparagine glycan. 2 disulfides stabilise this stretch: C56–C66 and C101–C112. N-linked (GlcNAc...) asparagine glycosylation occurs at N115. A disulfide bridge connects residues C126 and C140. The Fibronectin type-III domain maps to 151-254; the sequence is PPIALNWTLL…EVLYVTLPQM (104 aa). N-linked (GlcNAc...) asparagine glycosylation is found at N156, N161, and N200. Residues 240 to 244 carry the WSXWS motif motif; the sequence is YGEFS. Residues 265–288 traverse the membrane as a helical segment; it reads FPWLLIIIFGIFGLTVMLFVFLFS. The Cytoplasmic portion of the chain corresponds to 289-638; that stretch reads KQQRIKMLIL…STDQLNKIMP (350 aa). Positions 294-379 are required for JAK2 binding; sequence KMLILPPVPV…HQKSHSNLGV (86 aa). The Box 1 motif motif lies at 297-305; that stretch reads ILPPVPVPK. Positions 340-349 match the UbE motif motif; the sequence is DSWVEFIELD. S341 is subject to Phosphoserine. Residues 353 to 388 are disordered; that stretch reads PDEKNEGSDTDRLLSSDHQKSHSNLGVKDGDSGRTS. Residues 356–372 are compositionally biased toward basic and acidic residues; that stretch reads KNEGSDTDRLLSSDHQK. Phosphotyrosine is present on residues Y487 and Y595.

Belongs to the type I cytokine receptor family. Type 1 subfamily. In terms of assembly, on growth hormone (GH) binding, forms homodimers and binds JAK2 via a box 1-containing domain. The soluble form (GHBP) is produced by phorbol ester-promoted proteolytic cleavage at the cell surface (shedding) by ADAM17/TACE. Shedding is inhibited by growth hormone (GH) binding to the receptor probably due to a conformational change in GHR rendering the receptor inaccessible to ADAM17. In terms of processing, on GH binding, phosphorylated on tyrosine residues in the cytoplasmic domain by JAK2. Post-translationally, ubiquitinated by the ECS(SOCS2) complex following ligand-binding and phosphorylation by JAK2, leading to its degradation by the proteasome. Regulation by the ECS(SOCS2) complex acts as a negative feedback loop of growth hormone receptor signaling. Ubiquitination is not sufficient for GHR internalization.

The protein localises to the cell membrane. It localises to the secreted. Receptor for pituitary gland growth hormone (GH1) involved in regulating postnatal body growth. On ligand binding, couples to the JAK2/STAT5 pathway. Functionally, the soluble form (GHBP) acts as a reservoir of growth hormone in plasma and may be a modulator/inhibitor of GH signaling. The chain is Growth hormone receptor (GHR) from Papio anubis (Olive baboon).